Reading from the N-terminus, the 209-residue chain is DNA ADP-ribosyl transferase (209 aa).

The DarT domain maps to 9–209 (TPIYHITHID…RVCIRKDWYY (201 aa)). Residues 13–15 (HIT), glycine 22, and leucine 30 each bind NAD(+). The segment at 35 to 53 (SPPKQRSIAYAHIQERRNR) is NAD(+)-binding element. Residues 44 to 50 (YAHIQER) mediate DNA binding. Arginine 51 lines the NAD(+) pocket. Residue arginine 51 is the Proton acceptor of the active site. DNA-binding regions lie at residues 75–80 (RSPMLY), 145–148 (SYWA), and 154–158 (REKKQ). The segment at 116 to 160 (TDRHGVLSHARFFRQLEELAQLDWEAIQASYWADPPELREKKQAE) is ADP-ribosylating turn-turn loop. Glutamate 160 is an active-site residue.

The protein belongs to the DarT ADP-ribosyltransferase family. In terms of assembly, interacts with cognate antitoxin DarG (via C-terminus); this heterodimeric complex neutralizes the toxic effect of DarT by preventing ssDNA binding to DarT and consequently inactivating the toxin by direct protein-protein interactions.

It catalyses the reaction a thymidine in DNA + NAD(+) = an N-(ADP-alpha-D-ribosyl)-thymidine in DNA + nicotinamide + H(+). In terms of biological role, toxic component of the hybrid type II/IV toxin-antitoxin (TA) system DarTG, which plays a crucial role in controlling bacterial growth and bacteriophage infection. In case of phage infection, DarT toxin ADP-ribosylates DNA, which inhibits both viral DNA and RNA synthesis and leads to abortive infection. ADP-ribosylates ssDNA on the second thymidine of the consensus sequence 5'-TNTC-3'; the protein does not auto-modify. Arg-51 is highly flexible, allowing it to assume multiple positions in the crystal structures. Its toxic effect is neutralized by cognate antitoxin DarG. The chain is DNA ADP-ribosyl transferase from Thermus sp. (strain 2.9).